Here is a 408-residue protein sequence, read N- to C-terminus: Putative UPF0496 protein 2 (408 aa).

A run of 2 helical transmembrane segments spans residues 224–244 (RIAR…AIVA) and 252–272 (ALVG…GAAR). The interval 385–408 (MARGLPPPSPATVTTTSEERLTSS) is disordered.

This sequence belongs to the UPF0496 family.

It localises to the membrane. The protein is Putative UPF0496 protein 2 of Oryza sativa subsp. indica (Rice).